Here is a 433-residue protein sequence, read N- to C-terminus: Mitochondrial inner membrane protein OXA1L (433 aa).

Topologically, residues 1–108 are mitochondrial intermembrane; the sequence is MARNLVCGRW…QCATEPSFTE (108 aa). A helical transmembrane segment spans residues 109–129; the sequence is LGLGSYTPVGLIQNLLEYIHV. Over 130–134 the chain is Mitochondrial matrix; the sequence is DLGLP. A helical transmembrane segment spans residues 135–155; the sequence is WWGAIATCTVLARCLVFPLIV. At 156-207 the chain is on the mitochondrial intermembrane side; sequence KGQREAAKIHNHMPEMQKFSARIREAKLAGDQAEFYKATIEMTRYQKKHDIK. The chain crosses the membrane as a helical span at residues 208 to 228; sequence LLRPLILPLTQAPVFISFFIA. Residues 229 to 255 lie on the Mitochondrial matrix side of the membrane; that stretch reads LREMANLPVPSLQTGGLWWFQDLTVSD. Residues 256-276 form a helical membrane-spanning segment; the sequence is PIYVLPLVVTATMWCVLELGA. Over 277–293 the chain is Mitochondrial intermembrane; it reads ETGVQSNDLQFMRNIIR. The helical transmembrane segment at 294 to 314 threads the bilayer; it reads VMPLVVLPVTIHFPSAVFMYW. Residues 315 to 433 lie on the Mitochondrial matrix side of the membrane; that stretch reads LSSNVFSLCQ…AKKPWQDTLG (119 aa). S359 bears the Phosphoserine mark. A phosphothreonine mark is found at T395 and T397. The interval 397–433 is disordered; that stretch reads THNPLLQHDPSHPPKAPNSNNSSIKANAKKPWQDTLG. Residues 413 to 426 show a composition bias toward low complexity; it reads PNSNNSSIKANAKK.

Belongs to the OXA1/ALB3/YidC family. In terms of assembly, monomer; predominantly monomeric at low salt concentrations. Homooligomer; predominantly homooligomeric at high salt concentrations. Associates with the mitochondrial ribosome. Associates preferentially as a dimer with the large ribosomal subunit 39S of the mitochondrial ribosome. Interacts with OXA1L; promoting cotranslational quality control in mitochondria.

The protein resides in the mitochondrion inner membrane. Its function is as follows. Mitochondrial membrane insertase that mediates the cotranslational insertion of integral membrane proteins into the mitochondrial inner membrane. Essential for the activity and assembly of cytochrome oxidase. Required for the correct biogenesis of ATP synthase and complex I in mitochondria. This is Mitochondrial inner membrane protein OXA1L (Oxa1l) from Mus musculus (Mouse).